A 215-amino-acid polypeptide reads, in one-letter code: 5'-deoxynucleotidase YGK1 (215 aa).

An HD domain is found at Ile-58–Leu-164. 7 residues coordinate a divalent metal cation: His-61, His-89, Asp-90, Glu-93, Asp-98, Ile-99, and Asp-159.

This sequence belongs to the HDDC2 family. As to quaternary structure, homodimer. The cofactor is Mn(2+). Co(2+) is required as a cofactor. Requires Mg(2+) as cofactor.

The enzyme catalyses a 2'-deoxyribonucleoside 5'-phosphate + H2O = a 2'-deoxyribonucleoside + phosphate. In terms of biological role, catalyzes the dephosphorylation of the nucleoside 5'-monophosphates deoxyadenosine monophosphate (dAMP), deoxycytidine monophosphate (dCMP), deoxyguanosine monophosphate (dGMP) and deoxythymidine monophosphate (dTMP). In Saccharomyces cerevisiae (strain ATCC 204508 / S288c) (Baker's yeast), this protein is 5'-deoxynucleotidase YGK1.